The primary structure comprises 147 residues: Chorion class B protein B.L1 (147 aa).

The left arm stretch occupies residues 1-38 (IGCGRGCGGRGYGGLGYGGLGYGGLGYGGLGGGCGRGF). 4 tandem repeats follow at residues 11–15 (GYGGL), 16–20 (GYGGL), 21–25 (GYGGL), and 26–30 (GYGGL). The segment at 11–30 (GYGGLGYGGLGYGGLGYGGL) is 4 X 5 AA tandem repeats of G-Y-G-G-L. Positions 39-107 (SGGGLPVATA…GNGAVGITRE (69 aa)) are central domain. The right arm (Gly-rich tandem repeats) stretch occupies residues 108-147 (GGLGYGAGYGGGYGLGYGGYGGGYGLGYGGYGGCGCGCGY).

Belongs to the chorion protein family.

Its function is as follows. This protein is one of many from the eggshell of the silk moth. This Bombyx mori (Silk moth) protein is Chorion class B protein B.L1.